The primary structure comprises 365 residues: 2-aminoethylphosphonate--pyruvate transaminase (365 aa).

The residue at position 194 (lysine 194) is an N6-(pyridoxal phosphate)lysine.

Belongs to the class-V pyridoxal-phosphate-dependent aminotransferase family. PhnW subfamily. In terms of assembly, homodimer. It depends on pyridoxal 5'-phosphate as a cofactor.

It catalyses the reaction (2-aminoethyl)phosphonate + pyruvate = phosphonoacetaldehyde + L-alanine. Functionally, involved in phosphonate degradation. In Bacillus cereus (strain ATCC 14579 / DSM 31 / CCUG 7414 / JCM 2152 / NBRC 15305 / NCIMB 9373 / NCTC 2599 / NRRL B-3711), this protein is 2-aminoethylphosphonate--pyruvate transaminase.